Here is a 209-residue protein sequence, read N- to C-terminus: Ribosomal RNA large subunit methyltransferase E (209 aa).

Gly-63, Trp-65, Asp-83, Asp-99, and Asp-124 together coordinate S-adenosyl-L-methionine. The Proton acceptor role is filled by Lys-164.

Belongs to the class I-like SAM-binding methyltransferase superfamily. RNA methyltransferase RlmE family.

Its subcellular location is the cytoplasm. The catalysed reaction is uridine(2552) in 23S rRNA + S-adenosyl-L-methionine = 2'-O-methyluridine(2552) in 23S rRNA + S-adenosyl-L-homocysteine + H(+). Its function is as follows. Specifically methylates the uridine in position 2552 of 23S rRNA at the 2'-O position of the ribose in the fully assembled 50S ribosomal subunit. This is Ribosomal RNA large subunit methyltransferase E from Aliivibrio fischeri (strain ATCC 700601 / ES114) (Vibrio fischeri).